The following is a 170-amino-acid chain: Large ribosomal subunit protein uL22z (170 aa).

It belongs to the universal ribosomal protein uL22 family.

The polypeptide is Large ribosomal subunit protein uL22z (Hordeum vulgare (Barley)).